Consider the following 577-residue polypeptide: Arginine--tRNA ligase (577 aa).

The short motif at 122–132 (PNVAKEMHVGH) is the 'HIGH' region element.

Belongs to the class-I aminoacyl-tRNA synthetase family. As to quaternary structure, monomer.

It is found in the cytoplasm. The catalysed reaction is tRNA(Arg) + L-arginine + ATP = L-arginyl-tRNA(Arg) + AMP + diphosphate. This chain is Arginine--tRNA ligase, found in Edwardsiella ictaluri (strain 93-146).